We begin with the raw amino-acid sequence, 173 residues long: Disulfide bond formation protein B (173 aa).

At 1–14 the chain is on the cytoplasmic side; it reads MIEFLRRIAAHRLA. A helical membrane pass occupies residues 15–31; that stretch reads WGLLAASALFLELSALF. The Periplasmic segment spans residues 32 to 49; that stretch reads FQYVLGLHPCVMCVYERL. The cysteines at positions 41 and 44 are disulfide-linked. Residues 50 to 65 form a helical membrane-spanning segment; the sequence is AILGVLSAGLLGMVAP. The Cytoplasmic segment spans residues 66–72; sequence EKWYLRW. The chain crosses the membrane as a helical span at residues 73–90; sequence SALLLWGYSAFRGLQLAL. Topologically, residues 91 to 145 are periplasmic; sequence KHVDYQMNPSPFNVCSPFADFPSWAPLDQWLPWLFFPDGDCSEISWQFLSFSMPQ. Cys-105 and Cys-131 form a disulfide bridge. Residues 146 to 164 traverse the membrane as a helical segment; sequence WLVAIFAAYLLVFVVVTIG. Residues 165 to 173 lie on the Cytoplasmic side of the membrane; the sequence is NLVKGRCCS.

The protein belongs to the DsbB family.

It localises to the cell inner membrane. Its function is as follows. Required for disulfide bond formation in some periplasmic proteins. Acts by oxidizing the DsbA protein. In Aeromonas salmonicida (strain A449), this protein is Disulfide bond formation protein B.